A 316-amino-acid polypeptide reads, in one-letter code: Porphobilinogen deaminase (316 aa).

Residue Cys245 is modified to S-(dipyrrolylmethanemethyl)cysteine.

It belongs to the HMBS family. In terms of assembly, monomer. Dipyrromethane is required as a cofactor.

The catalysed reaction is 4 porphobilinogen + H2O = hydroxymethylbilane + 4 NH4(+). It functions in the pathway porphyrin-containing compound metabolism; protoporphyrin-IX biosynthesis; coproporphyrinogen-III from 5-aminolevulinate: step 2/4. It participates in porphyrin-containing compound metabolism; chlorophyll biosynthesis. Tetrapolymerization of the monopyrrole PBG into the hydroxymethylbilane pre-uroporphyrinogen in several discrete steps. In Prochlorococcus marinus (strain MIT 9515), this protein is Porphobilinogen deaminase.